The sequence spans 156 residues: Large ribosomal subunit protein eL24 (156 aa).

A disordered region spans residues 87–156 (LELIKERRSQ…AFQKVHATSR (70 aa)). Basic and acidic residues predominate over residues 89-129 (LIKERRSQKPSDRKAARDVKLAKDKEAKKADKAARKAEKAK). A compositionally biased stretch (low complexity) spans 130-147 (SAAAGAQSKVSKQQSKGA).

Belongs to the eukaryotic ribosomal protein eL24 family.

In Debaryomyces hansenii (strain ATCC 36239 / CBS 767 / BCRC 21394 / JCM 1990 / NBRC 0083 / IGC 2968) (Yeast), this protein is Large ribosomal subunit protein eL24 (RPL24).